An 836-amino-acid chain; its full sequence is Zinc fingers and homeoboxes protein 2 (836 aa).

The interval 24–58 is disordered; it reads LEEADRAKDKGLGVPPSDVSKERWAAEPEPSSKES. Residues 27 to 77 are interaction with EFNB1; it reads ADRAKDKGLGVPPSDVSKERWAAEPEPSSKESEVVEVRSVGESQSKKLQGG. Basic and acidic residues predominate over residues 42–58; it reads VSKERWAAEPEPSSKES. C2H2-type zinc fingers lie at residues 78–101 and 110–133; these read YECKYCPYSTQNLNEFTEHVDMQH and YVCAECNFTTKKYDSLSDHNSKFH. The tract at residues 168-210 is disordered; that stretch reads SAPGSSDNDPGVSVGKTATVKTGKQKADAKKVPKKPDEAAPDN. The span at 192–210 shows a compositional bias: basic and acidic residues; the sequence is QKADAKKVPKKPDEAAPDN. A required for homodimerization region spans residues 195-358; it reads DAKKVPKKPD…PAQLTPTKVS (164 aa). DNA-binding regions (homeobox) lie at residues 263–324, 439–501, 530–591, and 628–690; these read NTTK…WSPE, TPAS…IVHI, AQKF…EQAV, and SPSS…TLSW. The interval 263-446 is required for repressor activity; the sequence is NTTKYNSALD…PLTPASDRKK (184 aa). A required for interaction with NFYA region spans residues 263 to 497; that stretch reads NTTKYNSALD…SDHRYRCQRG (235 aa). The tract at residues 317-446 is required for nuclear localization; it reads HGISWSPEEV…PLTPASDRKK (130 aa). The tract at residues 404-442 is disordered; the sequence is GQKRPLVTPQAAPEPKRPHIAQVPEPPPKVANTPLTPAS. K455 is covalently cross-linked (Glycyl lysine isopeptide (Lys-Gly) (interchain with G-Cter in SUMO2)). Composition is skewed to basic and acidic residues over residues 700–709 and 730–746; these read SDDHGHDVAS and YAKDPKALGEEESEKLV. Residues 700-836 are disordered; it reads SDDHGHDVAS…DSTPAEAGQA (137 aa). S824 and S826 each carry phosphoserine.

The protein belongs to the ZHX family. Homodimer (via homeobox domain 1). Heterodimer with ZHX1 (via homeobox domain 1). Heterodimer with ZHX3 (via homeobox domain 1). Heterodimerization with ZHX1 is not necessary for repressor activity. Interacts (via homeobox domain) with NFYA (via N-terminus). Interacts with EFNB1 intracellular domain peptide; the interaction enhances ZHX2 transcriptional repression activity.

The protein localises to the nucleus. Acts as a transcriptional repressor. Represses the promoter activity of the CDC25C gene stimulated by NFYA. May play a role in retinal development where it regulates the composition of bipolar cell populations, by promoting differentiation of bipolar OFF-type cells. In the brain, may promote maintenance and suppress differentiation of neural progenitor cells in the developing cortex. The chain is Zinc fingers and homeoboxes protein 2 (Zhx2) from Rattus norvegicus (Rat).